The primary structure comprises 338 residues: Lumican (338 aa).

Residues 1-18 (MSLSAFTLFLALIGGTSG) form the signal peptide. The residue at position 19 (glutamine 19) is a Pyrrolidone carboxylic acid. Sulfotyrosine occurs at positions 20, 21, 23, and 30. An LRRNT domain is found at 28-66 (SIYGQSSPNCAPECNCPESYPSAMYCDELKLKSVPMVPP). LRR repeat units lie at residues 67 to 88 (GIKYLYLRNNQIDHIDEKAFEN), 91 to 114 (DLQWLILDHNLLENSKIKGRVFSK), 117 to 137 (QLKKLHINHNNLTESVGPLPK), 138 to 159 (SLEDLQLTHNKITKLGSFEGLV), 160 to 181 (NLTFIHLQHNRLKEDAVSAAFK), 185 to 205 (SLEYLDLSFNQIARLPSGLPV), 206 to 227 (SLLTLYLDNNKISNIPDEYFKR), 230 to 253 (ALQYLRLSHNELADSGIPGNSFNV), 255 to 276 (SLVELDLSYNKLKNIPTVNENL), and 277 to 296 (ENYYLEVNQLEKFDIKSFCK). Asparagine 88 is a glycosylation site (N-linked (GlcNAc...) (keratan sulfate) asparagine). Asparagine 127 carries an N-linked (GlcNAc...) (keratan sulfate) asparagine glycan. The N-linked (GlcNAc...) (keratan sulfate) asparagine glycan is linked to asparagine 160. Asparagine 252 carries N-linked (GlcNAc...) (keratan sulfate) asparagine glycosylation. Cysteine 295 and cysteine 328 are disulfide-bonded. Serine 304 carries the post-translational modification Phosphoserine. Residues 305-326 (KIKHLRLDGNRISETSLPPDMY) form an LRR 11 repeat.

This sequence belongs to the small leucine-rich proteoglycan (SLRP) family. SLRP class II subfamily. In terms of assembly, binds to laminin. Post-translationally, sulfated on tyrosine residue(s). In terms of processing, contains keratan sulfate. As to expression, cornea and other tissues.

The protein localises to the secreted. It localises to the extracellular space. It is found in the extracellular matrix. This is Lumican (LUM) from Homo sapiens (Human).